We begin with the raw amino-acid sequence, 242 residues long: Biosynthetic peptidoglycan transglycosylase (242 aa).

Residues 18–38 (VIMAVLCIAILYQLWMFSLVV) traverse the membrane as a helical segment.

This sequence belongs to the glycosyltransferase 51 family.

The protein resides in the cell inner membrane. The enzyme catalyses [GlcNAc-(1-&gt;4)-Mur2Ac(oyl-L-Ala-gamma-D-Glu-L-Lys-D-Ala-D-Ala)](n)-di-trans,octa-cis-undecaprenyl diphosphate + beta-D-GlcNAc-(1-&gt;4)-Mur2Ac(oyl-L-Ala-gamma-D-Glu-L-Lys-D-Ala-D-Ala)-di-trans,octa-cis-undecaprenyl diphosphate = [GlcNAc-(1-&gt;4)-Mur2Ac(oyl-L-Ala-gamma-D-Glu-L-Lys-D-Ala-D-Ala)](n+1)-di-trans,octa-cis-undecaprenyl diphosphate + di-trans,octa-cis-undecaprenyl diphosphate + H(+). It functions in the pathway cell wall biogenesis; peptidoglycan biosynthesis. Functionally, peptidoglycan polymerase that catalyzes glycan chain elongation from lipid-linked precursors. This chain is Biosynthetic peptidoglycan transglycosylase, found in Bordetella bronchiseptica (strain ATCC BAA-588 / NCTC 13252 / RB50) (Alcaligenes bronchisepticus).